We begin with the raw amino-acid sequence, 141 residues long: Globin, extracellular monomeric (141 aa).

A Globin domain is found at 1–141 (ECDALQRFKV…LGVITGAIHD (141 aa)). A disulfide bridge links cysteine 2 with cysteine 131. Histidine 94 is a binding site for heme b.

The protein belongs to the globin family. In terms of assembly, the giant hemoglobins of worms are formed of a monomeric subunit and a disulfide-bonded trimer. This subunit is monomeric.

It localises to the secreted. The chain is Globin, extracellular monomeric from Tubifex tubifex (Sludge worm).